The primary structure comprises 77 residues: Acyl carrier protein (77 aa).

Positions 1-76 constitute a Carrier domain; it reads MSIEERVKKI…SAIDYVTKAN (76 aa). At S36 the chain carries O-(pantetheine 4'-phosphoryl)serine.

The protein belongs to the acyl carrier protein (ACP) family. 4'-phosphopantetheine is transferred from CoA to a specific serine of apo-ACP by AcpS. This modification is essential for activity because fatty acids are bound in thioester linkage to the sulfhydryl of the prosthetic group.

It is found in the cytoplasm. Its pathway is lipid metabolism; fatty acid biosynthesis. In terms of biological role, carrier of the growing fatty acid chain in fatty acid biosynthesis. The polypeptide is Acyl carrier protein (Actinobacillus pleuropneumoniae serotype 5b (strain L20)).